A 555-amino-acid chain; its full sequence is uncharacterized protein (555 aa).

Positions 1 to 28 (MRSGLFGVLRWTAVGLVATLVASLALTA) are cleaved as a signal peptide. A lipid anchor (N-palmitoyl cysteine) is attached at cysteine 29. The S-diacylglycerol cysteine moiety is linked to residue cysteine 29.

It to M.tuberculosis Rv2585c and M.bovis Mb2616c.

It is found in the cell membrane. This is an uncharacterized protein from Mycobacterium leprae (strain TN).